We begin with the raw amino-acid sequence, 490 residues long: MNLAEICDNAKKGREYALLGNYDSSMVYYQGVIQQIQRHCQSVRDPAIKGKWQQVRQELLEEYEQVKSIVSTLESFKIDRPPDFPVSCQDEPFRDPAVWPPPVPAEHRAPPQIRRPNREVRPLRKEMAGVGARGPVGRAHPISKSEKPSTSRDKDCRARGRDDKGRKNMQDGASDGEMPKFDGAGYDKDLVEALERDIVSRNPSIHWDDIADLEEAKKLLREAVVLPMWMPDFFKGIRRPWKGVLMVGPPGTGKTMLAKAVATECGTTFFNVSSSTLTSKYRGESEKLVRLLFEMARFYAPTTIFIDEIDSICSRRGTSDEHEASRRVKSELLIQMDGVGGALENDDPSKMVMVLAATNFPWDIDEALRRRLEKRIYIPLPTAKGRAELLKINLREVELDPDIQLEDIAEKIEGYSGADITNVCRDASLMAMRRRINGLGPEEIRALSKEELQMPVTKGDFELALKKIAKSVSAADLEKYEKWMVEFGSA.

M1 is subject to N-acetylmethionine. The disordered stretch occupies residues 95-184 (DPAVWPPPVP…DGEMPKFDGA (90 aa)). Over residues 116–127 (PNREVRPLRKEM) the composition is skewed to basic and acidic residues. Positions 128–139 (AGVGARGPVGRA) are enriched in low complexity. Residues 143–169 (SKSEKPSTSRDKDCRARGRDDKGRKNM) show a composition bias toward basic and acidic residues. S174 carries the phosphoserine modification. Residue 248–255 (GPPGTGKT) coordinates ATP.

It belongs to the AAA ATPase family. Katanin p60 subunit A1 subfamily. A-like 1 sub-subfamily. As to quaternary structure, interacts with KATNB1 and KATNBL1.

The protein resides in the cytoplasm. It is found in the cytoskeleton. Its subcellular location is the spindle pole. The protein localises to the spindle. It carries out the reaction n ATP + n H2O + a microtubule = n ADP + n phosphate + (n+1) alpha/beta tubulin heterodimers.. Functionally, regulates microtubule dynamics in Sertoli cells, a process that is essential for spermiogenesis and male fertility. Severs microtubules in an ATP-dependent manner, promoting rapid reorganization of cellular microtubule arrays. Has microtubule-severing activity in vitro. The protein is Katanin p60 ATPase-containing subunit A-like 1 of Papio anubis (Olive baboon).